We begin with the raw amino-acid sequence, 316 residues long: Ornithine carbamoyltransferase (316 aa).

Carbamoyl phosphate is bound by residues S59–T62, Q86, R110, and H137–Q140. L-ornithine contacts are provided by residues N168, D232, and S236–M237. Carbamoyl phosphate is bound by residues C273–L274 and R301.

The protein belongs to the aspartate/ornithine carbamoyltransferase superfamily. OTCase family.

It localises to the cytoplasm. It catalyses the reaction carbamoyl phosphate + L-ornithine = L-citrulline + phosphate + H(+). The protein operates within amino-acid biosynthesis; L-arginine biosynthesis; L-arginine from L-ornithine and carbamoyl phosphate: step 1/3. Functionally, reversibly catalyzes the transfer of the carbamoyl group from carbamoyl phosphate (CP) to the N(epsilon) atom of ornithine (ORN) to produce L-citrulline. This chain is Ornithine carbamoyltransferase, found in Listeria monocytogenes serotype 4b (strain F2365).